The following is a 149-amino-acid chain: MESLYRVPFTVLECPNLKLKKPSWLHMPSAMTVYAMVVVSYFLITGGIIYDVIVEPPSVGSMTDEHGHQRPVAFLAYRVNGQYIMEGLASSFLFTMGGLGFIILDRSNAPNIPKLNRFLLLFIGFVCVLLSFFMARVFMRMKLPGYLMG.

Topologically, residues 1 to 32 (MESLYRVPFTVLECPNLKLKKPSWLHMPSAMT) are cytoplasmic. A helical membrane pass occupies residues 33-53 (VYAMVVVSYFLITGGIIYDVI). Topologically, residues 54–83 (VEPPSVGSMTDEHGHQRPVAFLAYRVNGQY) are extracellular. A helical membrane pass occupies residues 84 to 104 (IMEGLASSFLFTMGGLGFIIL). Residues 105 to 117 (DRSNAPNIPKLNR) lie on the Cytoplasmic side of the membrane. A helical membrane pass occupies residues 118-138 (FLLLFIGFVCVLLSFFMARVF). Topologically, residues 139 to 149 (MRMKLPGYLMG) are extracellular.

It belongs to the OSTC family. Specific component of the STT3A-containing form of the oligosaccharyltransferase (OST) complex.

Its subcellular location is the membrane. Its pathway is protein modification; protein glycosylation. Specific component of the STT3A-containing form of the oligosaccharyl transferase (OST) complex that catalyzes the initial transfer of a defined glycan (Glc(3)Man(9)GlcNAc(2) in eukaryotes) from the lipid carrier dolichol-pyrophosphate to an asparagine residue within an Asn-X-Ser/Thr consensus motif in nascent polypeptide chains, the first step in protein N-glycosylation. N-glycosylation occurs cotranslationally and the complex associates with the Sec61 complex at the channel-forming translocon complex that mediates protein translocation across the endoplasmic reticulum (ER). All subunits are required for a maximal enzyme activity. The polypeptide is Oligosaccharyltransferase complex subunit ostc (Xenopus tropicalis (Western clawed frog)).